Consider the following 431-residue polypeptide: Histidinol dehydrogenase (431 aa).

NAD(+) is bound by residues Y131, Q193, and N216. 3 residues coordinate substrate: S239, Q261, and H264. Residues Q261 and H264 each contribute to the Zn(2+) site. Active-site proton acceptor residues include E329 and H330. Residues H330, D363, E417, and H422 each contribute to the substrate site. A Zn(2+)-binding site is contributed by D363. H422 is a Zn(2+) binding site.

It belongs to the histidinol dehydrogenase family. Zn(2+) is required as a cofactor.

The enzyme catalyses L-histidinol + 2 NAD(+) + H2O = L-histidine + 2 NADH + 3 H(+). It participates in amino-acid biosynthesis; L-histidine biosynthesis; L-histidine from 5-phospho-alpha-D-ribose 1-diphosphate: step 9/9. Catalyzes the sequential NAD-dependent oxidations of L-histidinol to L-histidinaldehyde and then to L-histidine. This Clostridium acetobutylicum (strain ATCC 824 / DSM 792 / JCM 1419 / IAM 19013 / LMG 5710 / NBRC 13948 / NRRL B-527 / VKM B-1787 / 2291 / W) protein is Histidinol dehydrogenase.